Here is a 270-residue protein sequence, read N- to C-terminus: tRNA pseudouridine synthase A (270 aa).

The active-site Nucleophile is the Asp55. Tyr110 contacts substrate.

The protein belongs to the tRNA pseudouridine synthase TruA family.

It carries out the reaction uridine(38/39/40) in tRNA = pseudouridine(38/39/40) in tRNA. Its function is as follows. Formation of pseudouridine at positions 38, 39 and 40 in the anticodon stem and loop of transfer RNAs. This chain is tRNA pseudouridine synthase A, found in Methanoculleus marisnigri (strain ATCC 35101 / DSM 1498 / JR1).